A 372-amino-acid polypeptide reads, in one-letter code: Peptide chain release factor 1 (372 aa).

Gln237 is subject to N5-methylglutamine.

Belongs to the prokaryotic/mitochondrial release factor family. Methylated by PrmC. Methylation increases the termination efficiency of RF1.

Its subcellular location is the cytoplasm. Its function is as follows. Peptide chain release factor 1 directs the termination of translation in response to the peptide chain termination codons UAG and UAA. In Anaeromyxobacter sp. (strain Fw109-5), this protein is Peptide chain release factor 1.